Consider the following 529-residue polypeptide: MQQRRPVRRALLSVSDKAGIVEFAQALSARGVELLSTGGTARLLADKGLPVTEVSDYTGFPEMMDGRVKTLHPKVHGGILGRRGQDDGIMEQHGIAPIDMVVVNLYPFAQTVAREGCSLEDAVENIDIGGPTMVRSAAKNHKDVAIVVKSSDYDAIIKEMDSNDGSLTLDTRFDLAIKAFEHTAAYDSMIANYFGSMVPAYHGESKEAAGRFPRTLNLNFIKKQDMRYGENSHQQAAFYIEENVQEASVATAQQVQGKALSYNNIADTDAALECVKEFSEPACVIVKHANPCGVAVSTSILDAYDRAYKTDPTSAFGGIIAFNRELDAETAQAIISRQFVEVIIAPSASEDALKITAAKQNVRVLTCGQWAERVPGLDFKRVNGGLLVQDRDLGMVTEGELRVVSKRQPTEQELRDALFCWKVAKFVKSNAIVYAKENMTIGIGAGQMSRVYSAKIAGIKAGDEGLEVKGSAMASDAFFPFRDGIDAAAAVGVSCVIQPGGSIRDDEVIAAADEHGIAMIFTDMRHFRH.

An MGS-like domain is found at 1-148; that stretch reads MQQRRPVRRA…KNHKDVAIVV (148 aa).

The protein belongs to the PurH family.

It carries out the reaction (6R)-10-formyltetrahydrofolate + 5-amino-1-(5-phospho-beta-D-ribosyl)imidazole-4-carboxamide = 5-formamido-1-(5-phospho-D-ribosyl)imidazole-4-carboxamide + (6S)-5,6,7,8-tetrahydrofolate. It catalyses the reaction IMP + H2O = 5-formamido-1-(5-phospho-D-ribosyl)imidazole-4-carboxamide. Its pathway is purine metabolism; IMP biosynthesis via de novo pathway; 5-formamido-1-(5-phospho-D-ribosyl)imidazole-4-carboxamide from 5-amino-1-(5-phospho-D-ribosyl)imidazole-4-carboxamide (10-formyl THF route): step 1/1. It functions in the pathway purine metabolism; IMP biosynthesis via de novo pathway; IMP from 5-formamido-1-(5-phospho-D-ribosyl)imidazole-4-carboxamide: step 1/1. This is Bifunctional purine biosynthesis protein PurH from Citrobacter koseri (strain ATCC BAA-895 / CDC 4225-83 / SGSC4696).